The sequence spans 466 residues: Asparagine--tRNA ligase (466 aa).

This sequence belongs to the class-II aminoacyl-tRNA synthetase family. Homodimer.

The protein localises to the cytoplasm. The catalysed reaction is tRNA(Asn) + L-asparagine + ATP = L-asparaginyl-tRNA(Asn) + AMP + diphosphate + H(+). The sequence is that of Asparagine--tRNA ligase from Shewanella baltica (strain OS185).